The following is a 740-amino-acid chain: Ion-translocating oxidoreductase complex subunit C (740 aa).

4Fe-4S ferredoxin-type domains lie at 369-397 (GEPQ…QQLY) and 407-436 (KATT…VQYF). [4Fe-4S] cluster is bound by residues Cys377, Cys380, Cys383, Cys387, Cys416, Cys419, Cys422, and Cys426. Positions 602–718 (KLEQQQANAE…EEQVDPRKAA (117 aa)) are disordered.

Belongs to the 4Fe4S bacterial-type ferredoxin family. RnfC subfamily. In terms of assembly, the complex is composed of six subunits: RsxA, RsxB, RsxC, RsxD, RsxE and RsxG. Requires [4Fe-4S] cluster as cofactor.

It localises to the cell inner membrane. Its function is as follows. Part of a membrane-bound complex that couples electron transfer with translocation of ions across the membrane. Required to maintain the reduced state of SoxR. The polypeptide is Ion-translocating oxidoreductase complex subunit C (Shigella sonnei (strain Ss046)).